The following is an 804-amino-acid chain: Zinc finger protein YGR067C (804 aa).

C2H2-type zinc fingers lie at residues 8–30 and 36–59; these read YICS…ERSH and FQCQ…RTVH. The segment covering 782-796 has biased composition (polar residues); sequence QEFSASSTDNKQSKN. The segment at 782-804 is disordered; the sequence is QEFSASSTDNKQSKNIEIFSQIK.

The protein localises to the nucleus. The chain is Zinc finger protein YGR067C from Saccharomyces cerevisiae (strain ATCC 204508 / S288c) (Baker's yeast).